We begin with the raw amino-acid sequence, 151 residues long: SsrA-binding protein (151 aa).

It belongs to the SmpB family.

It is found in the cytoplasm. Its function is as follows. Required for rescue of stalled ribosomes mediated by trans-translation. Binds to transfer-messenger RNA (tmRNA), required for stable association of tmRNA with ribosomes. tmRNA and SmpB together mimic tRNA shape, replacing the anticodon stem-loop with SmpB. tmRNA is encoded by the ssrA gene; the 2 termini fold to resemble tRNA(Ala) and it encodes a 'tag peptide', a short internal open reading frame. During trans-translation Ala-aminoacylated tmRNA acts like a tRNA, entering the A-site of stalled ribosomes, displacing the stalled mRNA. The ribosome then switches to translate the ORF on the tmRNA; the nascent peptide is terminated with the 'tag peptide' encoded by the tmRNA and targeted for degradation. The ribosome is freed to recommence translation, which seems to be the essential function of trans-translation. In Wolinella succinogenes (strain ATCC 29543 / DSM 1740 / CCUG 13145 / JCM 31913 / LMG 7466 / NCTC 11488 / FDC 602W) (Vibrio succinogenes), this protein is SsrA-binding protein.